A 637-amino-acid polypeptide reads, in one-letter code: Threonine--tRNA ligase (637 aa).

The region spanning 1 to 61 (MPNVKLPDGN…KEDCSLIIVT (61 aa)) is the TGS domain. Positions 242–533 (DHRKLGKALD…LIEHYAGKLP (292 aa)) are catalytic. 3 residues coordinate Zn(2+): Cys-333, His-384, and His-510.

This sequence belongs to the class-II aminoacyl-tRNA synthetase family. Homodimer. Zn(2+) serves as cofactor.

It is found in the cytoplasm. The catalysed reaction is tRNA(Thr) + L-threonine + ATP = L-threonyl-tRNA(Thr) + AMP + diphosphate + H(+). Catalyzes the attachment of threonine to tRNA(Thr) in a two-step reaction: L-threonine is first activated by ATP to form Thr-AMP and then transferred to the acceptor end of tRNA(Thr). Also edits incorrectly charged L-seryl-tRNA(Thr). The protein is Threonine--tRNA ligase of Legionella pneumophila (strain Corby).